Consider the following 91-residue polypeptide: Sec-independent protein translocase protein TatA (91 aa).

Residues 1-21 (MGIFDWKHWIVILIVVVLVFG) traverse the membrane as a helical segment. The segment at 42 to 91 (AMNDDDKPAEQPAPQPQQAQAAPQGSPLNQPHTIDAQAHKVDEPIRKDQV) is disordered. Low complexity predominate over residues 51–65 (EQPAPQPQQAQAAPQ). The segment covering 78–91 (QAHKVDEPIRKDQV) has biased composition (basic and acidic residues).

It belongs to the TatA/E family. In terms of assembly, the Tat system comprises two distinct complexes: a TatABC complex, containing multiple copies of TatA, TatB and TatC subunits, and a separate TatA complex, containing only TatA subunits. Substrates initially bind to the TatABC complex, which probably triggers association of the separate TatA complex to form the active translocon.

The protein localises to the cell inner membrane. In terms of biological role, part of the twin-arginine translocation (Tat) system that transports large folded proteins containing a characteristic twin-arginine motif in their signal peptide across membranes. TatA could form the protein-conducting channel of the Tat system. The protein is Sec-independent protein translocase protein TatA of Pseudomonas savastanoi pv. phaseolicola (strain 1448A / Race 6) (Pseudomonas syringae pv. phaseolicola (strain 1448A / Race 6)).